Consider the following 360-residue polypeptide: Phenylalanine--tRNA ligase alpha subunit (360 aa).

Glu260 provides a ligand contact to Mg(2+).

It belongs to the class-II aminoacyl-tRNA synthetase family. Phe-tRNA synthetase alpha subunit type 1 subfamily. In terms of assembly, tetramer of two alpha and two beta subunits. The cofactor is Mg(2+).

Its subcellular location is the cytoplasm. The catalysed reaction is tRNA(Phe) + L-phenylalanine + ATP = L-phenylalanyl-tRNA(Phe) + AMP + diphosphate + H(+). In Afipia carboxidovorans (strain ATCC 49405 / DSM 1227 / KCTC 32145 / OM5) (Oligotropha carboxidovorans), this protein is Phenylalanine--tRNA ligase alpha subunit.